The following is a 370-amino-acid chain: Putative replication factor C small subunit L478 (370 aa).

41-48 (GPSGSGKK) lines the ATP pocket. Residues 342–353 (RNKEPEKSEKTK) are compositionally biased toward basic and acidic residues. The interval 342 to 370 (RNKEPEKSEKTKSKTGKLSRTNSKKTIKN) is disordered. Basic residues predominate over residues 354 to 370 (SKTGKLSRTNSKKTIKN).

The protein belongs to the activator 1 small subunits family. RfcS subfamily.

Its function is as follows. Part of the RFC clamp loader complex which loads the PCNA sliding clamp onto DNA. This chain is Putative replication factor C small subunit L478, found in Acanthamoeba polyphaga (Amoeba).